Here is a 65-residue protein sequence, read N- to C-terminus: Conotoxin Cal1.5 (65 aa).

Positions 1 to 18 (MRCLPVFIILLLLASTAA) are cleaved as a signal peptide. Positions 19-49 (VDVAGSKLKRRLERKPYQGSQAYVKKTAFGL) are excised as a propeptide. Cystine bridges form between Cys52/Cys62 and Cys53/Cys59. Pro61 carries the post-translational modification 4-hydroxyproline.

The protein belongs to the conotoxin T superfamily. Expressed by the venom duct.

The protein localises to the secreted. Probable neurotoxin with unknown target. Possibly targets ion channels. The chain is Conotoxin Cal1.5 from Californiconus californicus (California cone).